A 597-amino-acid polypeptide reads, in one-letter code: Blastula protease 10 (597 aa).

An N-terminal signal peptide occupies residues 1-16; that stretch reads MKLILFLSGLVSLVLC. A propeptide spans 17–93 (activation peptide); sequence TLAAPTGDQK…DEMTGRKKRK (77 aa). The segment at 24 to 67 is disordered; it reads DQKEIHTETPPPKKPSETTTPGALKTPQPEPKDEEPTPGAFQGD. The 202-residue stretch at 93–294 folds into the Peptidase M12A domain; that stretch reads KATIYESQRW…ELANLIYECD (202 aa). Cystine bridges form between Cys-134/Cys-293, Cys-162/Cys-182, Cys-299/Cys-315, Cys-305/Cys-317, Cys-319/Cys-328, Cys-339/Cys-365, Cys-392/Cys-412, Cys-484/Cys-510, and Cys-537/Cys-557. His-190 lines the Zn(2+) pocket. Glu-191 is an active-site residue. Zn(2+) contacts are provided by His-194 and His-200. Positions 295–329 constitute an EGF-like domain; the sequence is DIEDCAGANECLNGGYHDTECNCVCPSGYNGDLCE. CUB domains are found at residues 339–449 and 484–595; these read CSER…YRIV and CGGS…YRAI.

It depends on Zn(2+) as a cofactor.

It localises to the cytoplasm. The protein localises to the perinuclear region. Its subcellular location is the cell cortex. The protein resides in the secreted. It is found in the extracellular space. In terms of biological role, could be involved in the differentiation of ectodermal lineages and subsequent patterning of the embryo. This is Blastula protease 10 (BP10) from Paracentrotus lividus (Common sea urchin).